The chain runs to 164 residues: Phosphopantetheine adenylyltransferase (164 aa).

Substrate is bound at residue S9. ATP is bound by residues 9–10 (SF) and H17. Substrate contacts are provided by K41, L73, and R87. ATP-binding positions include E98 and 122–128 (YSFLSSS).

This sequence belongs to the bacterial CoaD family. Homohexamer. Mg(2+) serves as cofactor.

It is found in the cytoplasm. It carries out the reaction (R)-4'-phosphopantetheine + ATP + H(+) = 3'-dephospho-CoA + diphosphate. It functions in the pathway cofactor biosynthesis; coenzyme A biosynthesis; CoA from (R)-pantothenate: step 4/5. Functionally, reversibly transfers an adenylyl group from ATP to 4'-phosphopantetheine, yielding dephospho-CoA (dPCoA) and pyrophosphate. The chain is Phosphopantetheine adenylyltransferase from Thermobifida fusca (strain YX).